A 67-amino-acid polypeptide reads, in one-letter code: Small ribosomal subunit protein eS31 (67 aa).

The Zn(2+) site is built by cysteine 31, cysteine 34, cysteine 49, and cysteine 52. The C4-type zinc finger occupies 31–52 (CPKCGAGVFMAEHLNRFACGKC).

This sequence belongs to the eukaryotic ribosomal protein eS31 family. As to quaternary structure, part of the 30S ribosomal subunit. Zn(2+) is required as a cofactor.

This chain is Small ribosomal subunit protein eS31, found in Methanococcus maripaludis (strain C5 / ATCC BAA-1333).